The following is a 989-amino-acid chain: Atos homolog protein A (989 aa).

Positions 24 to 32 (TLLITEGRT) are transactivation domain 1 (TAD1). Disordered stretches follow at residues 244–295 (GEGG…LPPG), 393–477 (PDAL…KPAT), 525–639 (QNEQ…GLTQ), and 656–686 (EAEK…TPAN). Positions 254–270 (RSSLRLPRSPLFSRSLH) are enriched in low complexity. Residues 397–412 (FTSQEPPGHKTTWNST) show a composition bias toward polar residues. 2 stretches are compositionally biased toward basic and acidic residues: residues 413–423 (QDKECLKKSKD) and 460–471 (TRLDRVDRESKT). Composition is skewed to polar residues over residues 525 to 544 (QNEQ…VSLS) and 600 to 638 (TKSQ…NGLT). Basic and acidic residues predominate over residues 656–675 (EAEKHVRDGSTCLEKDENQE). Polar residues predominate over residues 676-686 (PHSSLSSTPAN). A required for macropage invasion region spans residues 792–849 (LLGNFEECVLNYRLEPLGTVEGFTAEVGASGTFCPSHMTLPVDVSFYSVSDDNAPSPY). The transactivation domain 2 (TAD2) stretch occupies residues 876-884 (FNPNKTVVK).

It belongs to the ATOS family.

It localises to the nucleus. In terms of biological role, transcription regulator that syncronizes transcriptional and translational programs to promote macrophage invasion of tissues. The polypeptide is Atos homolog protein A (atosa) (Danio rerio (Zebrafish)).